A 1029-amino-acid polypeptide reads, in one-letter code: Carbamoyl phosphate synthase large chain (1029 aa).

The tract at residues 1–402 is carboxyphosphate synthetic domain; that stretch reads MPKRTDLQTI…SLQKALRSTE (402 aa). 12 residues coordinate ATP: R129, R169, G175, G176, E208, I210, E215, G241, V242, H243, Q285, and E299. The region spanning 133–328 is the ATP-grasp 1 domain; that stretch reads QAAMKKIGVE…IAKIAALLAV (196 aa). Mg(2+) contacts are provided by Q285, E299, and N301. 3 residues coordinate Mn(2+): Q285, E299, and N301. Positions 403–544 are oligomerization domain; sequence SDIRGVYAEM…YHYSTYEWED (142 aa). Positions 545–929 are carbamoyl phosphate synthetic domain; the sequence is EVTGTDKPKV…AFYRAQLGAK (385 aa). Positions 671–863 constitute an ATP-grasp 2 domain; sequence NALCERLGLS…LAKSAARIAV (193 aa). ATP is bound by residues R707, Q747, L749, E754, G779, V780, H781, S782, Q822, and E834. Positions 822, 834, and 836 each coordinate Mg(2+). Mn(2+) contacts are provided by Q822, E834, and N836. In terms of domain architecture, MGS-like spans 930–1028; sequence SYLPLSGTAL…QDWQTQEAVA (99 aa). Residues 930 to 1029 are allosteric domain; the sequence is SYLPLSGTAL…DWQTQEAVAG (100 aa).

Belongs to the CarB family. In terms of assembly, composed of two chains; the small (or glutamine) chain promotes the hydrolysis of glutamine to ammonia, which is used by the large (or ammonia) chain to synthesize carbamoyl phosphate. Tetramer of heterodimers (alpha,beta)4. Mg(2+) is required as a cofactor. It depends on Mn(2+) as a cofactor.

The enzyme catalyses hydrogencarbonate + L-glutamine + 2 ATP + H2O = carbamoyl phosphate + L-glutamate + 2 ADP + phosphate + 2 H(+). The catalysed reaction is hydrogencarbonate + NH4(+) + 2 ATP = carbamoyl phosphate + 2 ADP + phosphate + 2 H(+). It functions in the pathway amino-acid biosynthesis; L-arginine biosynthesis; carbamoyl phosphate from bicarbonate: step 1/1. Its pathway is pyrimidine metabolism; UMP biosynthesis via de novo pathway; (S)-dihydroorotate from bicarbonate: step 1/3. Large subunit of the glutamine-dependent carbamoyl phosphate synthetase (CPSase). CPSase catalyzes the formation of carbamoyl phosphate from the ammonia moiety of glutamine, carbonate, and phosphate donated by ATP, constituting the first step of 2 biosynthetic pathways, one leading to arginine and/or urea and the other to pyrimidine nucleotides. The large subunit (synthetase) binds the substrates ammonia (free or transferred from glutamine from the small subunit), hydrogencarbonate and ATP and carries out an ATP-coupled ligase reaction, activating hydrogencarbonate by forming carboxy phosphate which reacts with ammonia to form carbamoyl phosphate. The sequence is that of Carbamoyl phosphate synthase large chain from Deinococcus deserti (strain DSM 17065 / CIP 109153 / LMG 22923 / VCD115).